The sequence spans 125 residues: MNIVHFGSDDIENSLANMSDQDLNQLAFGAIQLDASGKVLQYNAAEEGITGRDPKSVIGKNFFEDVAPCTKSQEFQGRFKEGVANGNLATMFEYVFDYQMKPTKVKVHMKKALVDDSYWIFVKRL.

A PAS domain is found at 23–86; it reads LNQLAFGAIQ…GRFKEGVANG (64 aa). An S-(4-hydroxycinnamyl)cysteine modification is found at Cys-69.

It belongs to the photoactive yellow protein family. Post-translationally, the 4-hydroxycinnamic acid (p-coumaric acid) chromophore is covalently bound via a thioester linkage.

Photoactive blue light protein. Probably functions as a photoreceptor for a negative phototaxis response. The sequence is that of Photoactive yellow protein (pyp) from Halochromatium salexigens (Chromatium salexigens).